We begin with the raw amino-acid sequence, 148 residues long: Large ribosomal subunit protein bL9 (148 aa).

It belongs to the bacterial ribosomal protein bL9 family.

In terms of biological role, binds to the 23S rRNA. This Caldicellulosiruptor saccharolyticus (strain ATCC 43494 / DSM 8903 / Tp8T 6331) protein is Large ribosomal subunit protein bL9.